The following is a 396-amino-acid chain: Putative peptide chain release factor 1, mitochondrial (396 aa).

Residue Gln-270 is modified to N5-methylglutamine.

The protein belongs to the prokaryotic/mitochondrial release factor family. In terms of processing, methylation of glutamine in the GGQ triplet is conserved from bacteria to mammals.

Its subcellular location is the mitochondrion. The protein is Putative peptide chain release factor 1, mitochondrial of Schizosaccharomyces pombe (strain 972 / ATCC 24843) (Fission yeast).